Consider the following 469-residue polypeptide: RNA-editing ligase 1, mitochondrial (469 aa).

The transit peptide at 1-44 (MQLQRLGAPLLKRLVGGCIRQSTAPIMPCVVVSGSGGFLTPVRT) directs the protein to the mitochondrion. ATP-binding positions include 59–61 (IEI), 86–92 (EKVHGTN), Asn-92, Arg-111, Glu-159, Phe-209, and 307–309 (KLR). The active-site N6-AMP-lysine intermediate is the Lys-87. The interval 450–469 (AAAQSEAIPPLSPAAPTKGE) is disordered.

Belongs to the RNA ligase 2 family. In terms of assembly, component of the RNA editing complex (editosome), a 1600 kDa complex composed of at least 20 proteins. Interacts with terminal uridylyltransferase MEAT1.

Its subcellular location is the mitochondrion. The catalysed reaction is ATP + (ribonucleotide)n-3'-hydroxyl + 5'-phospho-(ribonucleotide)m = (ribonucleotide)n+m + AMP + diphosphate.. Essential for RNA editing. RNA editing in kinetoplastid mitochondria inserts and deletes uridylates at multiple sites in pre-mRNAs as directed by guide RNAs. This is RNA-editing ligase 1, mitochondrial (REL1) from Trypanosoma brucei brucei (strain 927/4 GUTat10.1).